Consider the following 274-residue polypeptide: Rhamnulose-1-phosphate aldolase (274 aa).

Residue glutamate 117 is part of the active site. Residues histidine 141, histidine 143, and histidine 212 each contribute to the Zn(2+) site.

It belongs to the aldolase class II family. RhaD subfamily. In terms of assembly, homotetramer. It depends on Zn(2+) as a cofactor.

The protein localises to the cytoplasm. The catalysed reaction is L-rhamnulose 1-phosphate = (S)-lactaldehyde + dihydroxyacetone phosphate. It functions in the pathway carbohydrate degradation; L-rhamnose degradation; glycerone phosphate from L-rhamnose: step 3/3. Catalyzes the reversible cleavage of L-rhamnulose-1-phosphate to dihydroxyacetone phosphate (DHAP) and L-lactaldehyde. The sequence is that of Rhamnulose-1-phosphate aldolase from Escherichia coli O7:K1 (strain IAI39 / ExPEC).